A 204-amino-acid polypeptide reads, in one-letter code: Large ribosomal subunit protein eL15 (204 aa).

The protein belongs to the eukaryotic ribosomal protein eL15 family. As to quaternary structure, component of the large ribosomal subunit.

It is found in the cytoplasm. In terms of biological role, component of the large ribosomal subunit. The ribosome is a large ribonucleoprotein complex responsible for the synthesis of proteins in the cell. The chain is Large ribosomal subunit protein eL15 (rpl15) from Paramisgurnus dabryanus.